The primary structure comprises 165 residues: uncharacterized protein (165 aa).

The segment at 68-107 (LEGAPEWAAPHPEEQRRSPPACSQHTPPLPSTPTGPPPCS) is disordered. The span at 94–107 (PPLPSTPTGPPPCS) shows a compositional bias: pro residues.

This is an uncharacterized protein from Homo sapiens (Human).